Reading from the N-terminus, the 574-residue chain is E3 ubiquitin-protein ligase TRIM23 (574 aa).

An RING-type; degenerate zinc finger spans residues 31–76; the sequence is CGVCEDVFSLQGDKVPRLLLCGHTVCHDCLTRLPLHGRAIRCPFDR. A B box-type; degenerate zinc finger spans residues 122-168; sequence ESIIRCDEDEAHLASVYCTVCATHLCSECSQVTHSTKTLAKHRRVPL. Residues 352-379 are a coiled coil; the sequence is RVVLAKQEITRLLETLQKQQQQFTEVAD. The interval 390-574 is ARF-like; sequence TFTKDNRVHI…LVAAGVLDVA (185 aa). GTP contacts are provided by residues 411–418, 454–458, and 513–516; these read GLDGAGKT, DVGGK, and NKQD.

This sequence in the C-terminal section; belongs to the small GTPase superfamily. Arf family. As to quaternary structure, homodimer. Interacts with PSCD1. Interacts with UBE2D2. Interacts with TBK1 (via N-terminal kinase domain) and p62/SQSTM1. In terms of assembly, (Microbial infection) Interacts with human cytomegalovirus protein UL144; this interaction might cause autoubiquitination of TRAF6, leading to NF-kappa-B activation.

It localises to the cytoplasm. The protein resides in the endomembrane system. It is found in the golgi apparatus membrane. Its subcellular location is the lysosome membrane. The enzyme catalyses S-ubiquitinyl-[E2 ubiquitin-conjugating enzyme]-L-cysteine + [acceptor protein]-L-lysine = [E2 ubiquitin-conjugating enzyme]-L-cysteine + N(6)-ubiquitinyl-[acceptor protein]-L-lysine.. Its pathway is protein modification; protein ubiquitination. Functionally, acts as an E3 ubiquitin-protein ligase. Plays an essential role in autophagy activation during viral infection. Mechanistically, activates TANK-binding kinase 1/TBK1 by facilitating its dimerization and ability to phosphorylate the selective autophagy receptor SQSTM1. In order to achieve this function, TRIM23 mediates 'Lys-27'-linked auto-ubiquitination of its ADP-ribosylation factor (ARF) domain to induce its GTPase activity and its recruitment to autophagosomes. Its function is as follows. (Microbial infection) Mediates TRAF6 auto-ubiquitination in the presence of human cytomegalovirus protein UL144, resulting in the virally controlled activation of NF-kappa-B stimulation at early times of HCMV infection. In Homo sapiens (Human), this protein is E3 ubiquitin-protein ligase TRIM23 (TRIM23).